Reading from the N-terminus, the 211-residue chain is N,O-diacetylmuramidase (211 aa).

Residues D6 and E100 contribute to the active site. C108 and C147 are oxidised to a cystine.

It belongs to the glycosyl hydrolase 25 family.

The protein localises to the secreted. It is found in the extracellular space. It carries out the reaction Hydrolysis of (1-&gt;4)-beta-linkages between N-acetylmuramic acid and N-acetyl-D-glucosamine residues in a peptidoglycan and between N-acetyl-D-glucosamine residues in chitodextrins.. Functionally, this enzyme has both lysozyme (acetylmuramidase) and diacetylmuramidase activities. This is N,O-diacetylmuramidase from Chalaropsis sp.